The chain runs to 120 residues: NAD(P)H-quinone oxidoreductase subunit 3 (120 aa).

The next 3 membrane-spanning stretches (helical) occupy residues 10–30 (FLGF…TNLI), 64–84 (MFAL…PWAV), and 89–109 (LGLL…IALA).

This sequence belongs to the complex I subunit 3 family. NDH-1 can be composed of about 15 different subunits; different subcomplexes with different compositions have been identified which probably have different functions.

The protein localises to the cellular thylakoid membrane. The catalysed reaction is a plastoquinone + NADH + (n+1) H(+)(in) = a plastoquinol + NAD(+) + n H(+)(out). It carries out the reaction a plastoquinone + NADPH + (n+1) H(+)(in) = a plastoquinol + NADP(+) + n H(+)(out). NDH-1 shuttles electrons from an unknown electron donor, via FMN and iron-sulfur (Fe-S) centers, to quinones in the respiratory and/or the photosynthetic chain. The immediate electron acceptor for the enzyme in this species is believed to be plastoquinone. Couples the redox reaction to proton translocation, and thus conserves the redox energy in a proton gradient. Cyanobacterial NDH-1 also plays a role in inorganic carbon-concentration. This chain is NAD(P)H-quinone oxidoreductase subunit 3, found in Prochlorococcus marinus (strain MIT 9515).